The following is a 795-amino-acid chain: Lon protease (795 aa).

The 207-residue stretch at 7–213 (PQILVVRNQV…KIIGSGIEDL (207 aa)) folds into the Lon N-terminal domain. 379–386 (GPPGVGKS) is an ATP binding site. The region spanning 615–795 (DALPGIVNGM…YKDIYNKIFN (181 aa)) is the Lon proteolytic domain. Active-site residues include Ser-702 and Lys-745.

This sequence belongs to the peptidase S16 family. As to quaternary structure, homohexamer. Organized in a ring with a central cavity.

The protein localises to the cytoplasm. The enzyme catalyses Hydrolysis of proteins in presence of ATP.. In terms of biological role, ATP-dependent serine protease that mediates the selective degradation of mutant and abnormal proteins as well as certain short-lived regulatory proteins. Required for cellular homeostasis and for survival from DNA damage and developmental changes induced by stress. Degrades polypeptides processively to yield small peptide fragments that are 5 to 10 amino acids long. Binds to DNA in a double-stranded, site-specific manner. The sequence is that of Lon protease from Mycoplasma pneumoniae (strain ATCC 29342 / M129 / Subtype 1) (Mycoplasmoides pneumoniae).